Here is a 188-residue protein sequence, read N- to C-terminus: Cell division protein SepF (188 aa).

Over residues 152–162 the composition is skewed to polar residues; that stretch reads TSHDEASTPTV. The disordered stretch occupies residues 152–188; sequence TSHDEASTPTVVSRDAEAEQQQEAAAAPSPAWGATAL.

This sequence belongs to the SepF family. As to quaternary structure, homodimer. Interacts with FtsZ.

The protein localises to the cytoplasm. Its function is as follows. Cell division protein that is part of the divisome complex and is recruited early to the Z-ring. Probably stimulates Z-ring formation, perhaps through the cross-linking of FtsZ protofilaments. Its function overlaps with FtsA. The polypeptide is Cell division protein SepF (Parasynechococcus marenigrum (strain WH8102)).